The primary structure comprises 84 residues: ATP synthase subunit c (84 aa).

A run of 2 helical transmembrane segments spans residues 9 to 29 (IIAS…GFAI) and 54 to 74 (IVAG…LLFI).

This sequence belongs to the ATPase C chain family. F-type ATPases have 2 components, F(1) - the catalytic core - and F(0) - the membrane proton channel. F(1) has five subunits: alpha(3), beta(3), gamma(1), delta(1), epsilon(1). F(0) has three main subunits: a(1), b(2) and c(10-14). The alpha and beta chains form an alternating ring which encloses part of the gamma chain. F(1) is attached to F(0) by a central stalk formed by the gamma and epsilon chains, while a peripheral stalk is formed by the delta and b chains.

The protein resides in the cell inner membrane. Functionally, f(1)F(0) ATP synthase produces ATP from ADP in the presence of a proton or sodium gradient. F-type ATPases consist of two structural domains, F(1) containing the extramembraneous catalytic core and F(0) containing the membrane proton channel, linked together by a central stalk and a peripheral stalk. During catalysis, ATP synthesis in the catalytic domain of F(1) is coupled via a rotary mechanism of the central stalk subunits to proton translocation. In terms of biological role, key component of the F(0) channel; it plays a direct role in translocation across the membrane. A homomeric c-ring of between 10-14 subunits forms the central stalk rotor element with the F(1) delta and epsilon subunits. The protein is ATP synthase subunit c of Pasteurella multocida (strain Pm70).